The following is a 3515-amino-acid chain: Microtubule-actin cross-linking factor 1, isoforms 6/7 (3515 aa).

Disordered regions lie at residues 1 to 23 (MGKP…KGEE), 108 to 136 (VQKS…WKSF), 155 to 196 (VSEA…TLEH), 965 to 1178 (TEED…AVPT), 1217 to 1298 (SPAA…SPAA), 1710 to 1730 (EELA…QFQQ), and 3078 to 3108 (PTHA…ILSQ). Over residues 120 to 129 (PNAERKDNVN) the composition is skewed to basic and acidic residues. The interval 157–245 (EAGASNPSLQ…ESEAVATSGN (89 aa)) is 13 X 13 AA approximate tandem repeat of P-T-S-P-A-A-A-V-P-T-P-E-E. Composition is skewed to low complexity over residues 995–1031 (STPE…SPAA) and 1040–1139 (TSPA…AVPT). 13 repeat units span residues 1012-1024 (EPTS…PTPE), 1026-1037 (PTSPAAAVPPPE), 1038-1051 (EPTS…TPEE), 1052-1064 (PTSP…TPEE), 1065-1077 (PTSP…TPEE), 1078-1090 (PTSP…TPEE), 1091-1103 (PTSP…TPEE), 1104-1116 (PTSP…TPEE), 1117-1129 (PASP…TPEE), 1130-1142 (PASP…TPEE), 1143-1155 (PAFP…TPEE), 1156-1168 (SASA…TPEE), and 1169-1178 (SASPAAAVPT). Positions 1140–1151 (PEEPAFPAPAVP) are enriched in pro residues. Low complexity-rich tracts occupy residues 1162–1178 (AVPT…AVPT) and 1268–1298 (SSPA…SPAA). Over residues 1715–1730 (SGGQSPTGEQIPQFQQ) the composition is skewed to polar residues. EF-hand domains lie at 3168-3203 (HKKS…SKFP) and 3204-3239 (TTKL…NKDA). Positions 3181, 3183, 3185, 3187, 3192, 3217, 3219, 3221, 3223, and 3228 each coordinate Ca(2+). The GAR domain occupies 3244–3316 (TDADKIEDEV…EFLVKNDPCR (73 aa)). The tract at residues 3332–3515 (PEGASQGMTP…ASPRTPGPKR (184 aa)) is disordered. Over residues 3352–3386 (SSRAASPTRSSSSASQSNHSCTSMPSSPATPASGT) the composition is skewed to low complexity. Residues 3402–3426 (TFHSSRTSLAGDTSNSSSPASTGAK) are compositionally biased toward polar residues. Over residues 3437-3451 (SRPGSRAGSRAGSRA) the composition is skewed to low complexity. Positions 3466-3488 (ETQSACSDTSESSAAGGQGNSRR) are enriched in polar residues.

The protein resides in the cytoplasm. The protein localises to the cytoskeleton. This chain is Microtubule-actin cross-linking factor 1, isoforms 6/7, found in Homo sapiens (Human).